A 384-amino-acid polypeptide reads, in one-letter code: 1-deoxy-D-xylulose 5-phosphate reductoisomerase (384 aa).

7 residues coordinate NADPH: threonine 10, glycine 11, serine 12, isoleucine 13, arginine 37, asparagine 38, and asparagine 124. A 1-deoxy-D-xylulose 5-phosphate-binding site is contributed by lysine 125. Glutamate 126 provides a ligand contact to NADPH. Aspartate 150 provides a ligand contact to Mn(2+). The 1-deoxy-D-xylulose 5-phosphate site is built by serine 151, glutamate 152, serine 176, and histidine 199. Glutamate 152 contacts Mn(2+). Glycine 205 is an NADPH binding site. 1-deoxy-D-xylulose 5-phosphate is bound by residues serine 212, asparagine 217, lysine 218, and glutamate 221. Position 221 (glutamate 221) interacts with Mn(2+).

It belongs to the DXR family. Requires Mg(2+) as cofactor. Mn(2+) is required as a cofactor.

It catalyses the reaction 2-C-methyl-D-erythritol 4-phosphate + NADP(+) = 1-deoxy-D-xylulose 5-phosphate + NADPH + H(+). The protein operates within isoprenoid biosynthesis; isopentenyl diphosphate biosynthesis via DXP pathway; isopentenyl diphosphate from 1-deoxy-D-xylulose 5-phosphate: step 1/6. Its function is as follows. Catalyzes the NADPH-dependent rearrangement and reduction of 1-deoxy-D-xylulose-5-phosphate (DXP) to 2-C-methyl-D-erythritol 4-phosphate (MEP). The protein is 1-deoxy-D-xylulose 5-phosphate reductoisomerase of Clostridium perfringens (strain ATCC 13124 / DSM 756 / JCM 1290 / NCIMB 6125 / NCTC 8237 / Type A).